We begin with the raw amino-acid sequence, 79 residues long: U-actitoxin-Bgr3d (79 aa).

Residues 1-21 (MSYERLLCLVLVASFIAASVA) form the signal peptide. A propeptide spanning residues 22–38 (QHPGDAPRMEDDSSAIQ) is cleaved from the precursor. 3 disulfide bridges follow: Cys44–Cys76, Cys46–Cys69, and Cys59–Cys77.

This sequence belongs to the sea anemone type 3 (BDS) potassium channel toxin family.

The protein localises to the secreted. Its subcellular location is the nematocyst. In terms of biological role, potently and selectively inhibits voltage-gated potassium channels Kv11/KCNH/ERG. Acts as a gating-modifier toxin that shifts the voltage-dependence of ERG activation in the positive direction and suppresses its current amplitudes elicited by strong depolarizing pulses that maximally activate the channels. The chain is U-actitoxin-Bgr3d from Bunodosoma granuliferum (Red warty sea anemone).